We begin with the raw amino-acid sequence, 640 residues long: tRNA-dihydrouridine(47) synthase [NAD(P)(+)]-like (640 aa).

Over residues M1–E10 the composition is skewed to low complexity. 2 disordered regions span residues M1–C22 and D47–K106. An N-acetylalanine modification is found at A2. Over residues P64–V91 the composition is skewed to basic and acidic residues. Over residues P92–K106 the composition is skewed to basic residues. 2 C3H1-type zinc fingers span residues Y110–G140 and A148–P178. The residue at position 267 (S267) is a Phosphoserine. FMN-binding positions include P301–T303 and Q355. C386 (proton donor) is an active-site residue. K406 is covalently cross-linked (Glycyl lysine isopeptide (Lys-Gly) (interchain with G-Cter in SUMO2)). FMN contacts are provided by residues K425, H455, N487–D489, and A510–R511.

Belongs to the Dus family. Dus3 subfamily. The cofactor is FMN.

It carries out the reaction 5,6-dihydrouridine(47) in tRNA + NAD(+) = uridine(47) in tRNA + NADH + H(+). It catalyses the reaction 5,6-dihydrouridine(47) in tRNA + NADP(+) = uridine(47) in tRNA + NADPH + H(+). The enzyme catalyses a 5,6-dihydrouridine in mRNA + NAD(+) = a uridine in mRNA + NADH + H(+). The catalysed reaction is a 5,6-dihydrouridine in mRNA + NADP(+) = a uridine in mRNA + NADPH + H(+). Catalyzes the synthesis of dihydrouridine, a modified base, in various RNAs, such as tRNAs, mRNAs and some long non-coding RNAs (lncRNAs). Mainly modifies the uridine in position 47 (U47) in the D-loop of most cytoplasmic tRNAs. Also able to mediate the formation of dihydrouridine in some mRNAs, thereby regulating their translation. The sequence is that of tRNA-dihydrouridine(47) synthase [NAD(P)(+)]-like from Rattus norvegicus (Rat).